Here is a 292-residue protein sequence, read N- to C-terminus: Calcium-binding protein CBP (292 aa).

The interval 1-80 is disordered; it reads MAGYPPNPGS…YGSGGGYGAP (80 aa). Residues 12–21 show a composition bias toward gly residues; sequence YPYGGAGGYG. The span at 22–40 shows a compositional bias: pro residues; the sequence is APPPPYGSSPAPSAPPYGA. EF-hand domains follow at residues 121–156 and 187–222; these read GTDP…YSQS and YSLQ…LGYS. Asp134, Asp136, Ser138, Met140, Glu145, Asp200, Asp202, Ser204, Lys206, and Glu211 together coordinate Ca(2+).

Potential calcium sensor. The polypeptide is Calcium-binding protein CBP (Oryza sativa subsp. japonica (Rice)).